Consider the following 398-residue polypeptide: Phosphoglycerate kinase (398 aa).

Substrate-binding positions include 20-22 (DLN), R35, 58-61 (HLGR), R118, and R155. Residues K206, G295, E326, and 354–357 (GGDS) each bind ATP.

This sequence belongs to the phosphoglycerate kinase family. In terms of assembly, monomer.

It is found in the cytoplasm. It catalyses the reaction (2R)-3-phosphoglycerate + ATP = (2R)-3-phospho-glyceroyl phosphate + ADP. It participates in carbohydrate degradation; glycolysis; pyruvate from D-glyceraldehyde 3-phosphate: step 2/5. The sequence is that of Phosphoglycerate kinase from Onion yellows phytoplasma (strain OY-M).